Reading from the N-terminus, the 594-residue chain is Fidgetin-like protein 1 (594 aa).

Disordered stretches follow at residues 1-79 and 239-261; these read MYSP…DDEL and QSIGSLAGIPPARRAPDIPKRCS. Over residues 56–73 the composition is skewed to polar residues; sequence PSDSAQQQPPFKSRSQQN. ATP is bound by residues Ala319 and 359-364; that span reads GTGKTM.

Belongs to the AAA ATPase family. As to quaternary structure, hexamer. It depends on Mg(2+) as a cofactor. As to expression, expressed in germ cells.

The protein localises to the nucleus. It catalyses the reaction ATP + H2O = ADP + phosphate + H(+). In terms of biological role, has a role in spindle assembly which acts in the progression through mitosis during embryogenesis. Required for fertility. The protein is Fidgetin-like protein 1 (figl-1) of Caenorhabditis elegans.